Consider the following 139-residue polypeptide: D-ribose pyranase (139 aa).

Residue His-20 is the Proton donor of the active site. Substrate is bound by residues Asp-28, His-106, and 128–130; that span reads YAN.

It belongs to the RbsD / FucU family. RbsD subfamily. As to quaternary structure, homodecamer.

It localises to the cytoplasm. The catalysed reaction is beta-D-ribopyranose = beta-D-ribofuranose. It participates in carbohydrate metabolism; D-ribose degradation; D-ribose 5-phosphate from beta-D-ribopyranose: step 1/2. Catalyzes the interconversion of beta-pyran and beta-furan forms of D-ribose. In Escherichia coli (strain 55989 / EAEC), this protein is D-ribose pyranase.